The chain runs to 220 residues: Probable transcriptional regulator NRG2 (220 aa).

2 consecutive C2H2-type zinc fingers follow at residues 153–175 (HFCKICSTGFTTSGHLSRHNRIH) and 181–205 (HICPHEGCGQRFSRHDNCNQHYRTH).

The protein localises to the nucleus. Functionally, transcriptional repressor. The protein is Probable transcriptional regulator NRG2 (NRG2) of Saccharomyces cerevisiae (strain ATCC 204508 / S288c) (Baker's yeast).